A 104-amino-acid polypeptide reads, in one-letter code: MSPPPAESHIILLIQQGSDPKTRIWSDHCSLRSAIEYIVGVYQTNQAVSEKESIDVSRFFNFFDEIYDCVPLVYDRHFRAYIPHEKQWLLHHAQEYLTAARQIP.

Belongs to the E(R) family. As to quaternary structure, homodimer. Component of the erh1-mmi1 complex. Interacts with mmi1 (via N-terminus) in a 2:2 stoichiometry.

Its subcellular location is the nucleus. The protein resides in the cytoplasm. Forms part of the erh1-mmi1 complex that recruits the CCR4-NOT complex and the NURS complex to target RNAs. Suppresses the meiotic program during vegetative growth and promotes the meiotic program during mating. Recruitment of the NURS complex to target mRNAs promotes mRNA decay by engagement of the nuclear exosome, and formation of heterochromatin islands at meiotic genes silenced by the exosome. Recruitment of the CCR4-NOT complex to target RNAs promotes heterochromatin formation at RNAi-dependent heterochromatin domains (HOODs), including a subset of meiotic genes, lncRNAs and retrotransposons. Recruitment of the CCR4-NOT complex to rDNA promotes rDNA heterochromatin assembly. The protein is Enhancer of rudimentary homolog 1 of Schizosaccharomyces pombe (strain 972 / ATCC 24843) (Fission yeast).